We begin with the raw amino-acid sequence, 382 residues long: uncharacterized protein (382 aa).

Helical transmembrane passes span 14–34 (GLLLLTLAIAVLNTLVPLWLA), 45–65 (VVSSSYFTGNLVGTLLTGYVI), 75–95 (YLASFIFAAGCAGLGLMIGFW), 102–122 (FVAGVGCAMIWVVVESALMCS), 131–151 (LLAAYMMVYYVGTFLGQLLVS), 157–177 (LMSVLPWVTGLTLAGILPLLF), 206–226 (VNGCIISGIVLGSLYGLMPLF), 235–255 (ASIGFWMAVLVSAGILGQWPI), 270–290 (VQVFVVILGSIAMLSQAAMAP), 291–311 (ALFILGAAGFTLYPVAMAWAC), 325–345 (ALLLSYTVGSLLGPSFTAMLM), and 348–368 (FSDNLLFIMIASVSFIYLLML).

The protein belongs to the major facilitator superfamily. YcaD (TC 2.A.1.26) family.

The protein localises to the cell inner membrane. This is an uncharacterized protein from Escherichia coli O17:K52:H18 (strain UMN026 / ExPEC).